Reading from the N-terminus, the 262-residue chain is Global transcriptional regulator CodY (262 aa).

Residues 1 to 159 form a GAF domain region; it reads MAHLLEKTRK…SSTVVGIQLL (159 aa). A DNA-binding region (H-T-H motif) is located at residues 207–226; it reads ASVIADRIGITRSVIVNALR.

The protein belongs to the CodY family.

Its subcellular location is the cytoplasm. In terms of biological role, DNA-binding global transcriptional regulator which is involved in the adaptive response to starvation and acts by directly or indirectly controlling the expression of numerous genes in response to nutrient availability. During rapid exponential growth, CodY is highly active and represses genes whose products allow adaptation to nutrient depletion. This chain is Global transcriptional regulator CodY, found in Streptococcus gordonii (strain Challis / ATCC 35105 / BCRC 15272 / CH1 / DL1 / V288).